The following is an 81-amino-acid chain: Mipartoxin-1A (81 aa).

The N-terminal stretch at 1–21 (MKTLLLTLVVVTIVCLDLGNS) is a signal peptide. 4 disulfides stabilise this stretch: cysteine 24/cysteine 42, cysteine 35/cysteine 61, cysteine 65/cysteine 73, and cysteine 74/cysteine 79.

Belongs to the three-finger toxin family. Short-chain subfamily. As to expression, expressed by the venom gland.

Its subcellular location is the secreted. Its function is as follows. Snake venom neurotoxin that blocks neuromuscular transmission, presenting a postsynaptic action through the nicotinic acetylcholine receptor (nAChR). Has no cytotoxic activity. This is Mipartoxin-1A from Micrurus mipartitus (Red-tailed coral snake).